The chain runs to 104 residues: Flagellar hook-basal body complex protein FliE (104 aa).

This sequence belongs to the FliE family.

The protein resides in the bacterial flagellum basal body. The protein is Flagellar hook-basal body complex protein FliE of Escherichia coli O6:K15:H31 (strain 536 / UPEC).